Here is a 118-residue protein sequence, read N- to C-terminus: Protein Rev (118 aa).

S5 bears the Phosphoserine; by host CK2 mark. The segment at 18–26 (LIKILYQSN) is homomultimerization. Positions 23-49 (YQSNPPPSPEGTRQARRNRRRRWRARQ) are disordered. The Nuclear localization signal and RNA-binding (RRE) signature appears at 34–50 (TRQARRNRRRRWRARQR). Over residues 36–49 (QARRNRRRRWRARQ) the composition is skewed to basic residues. A Nuclear export signal and binding to XPO1 motif is present at residues 73–84 (LQLPPLERLNLN). The segment at 89-118 (CGASGTQGVGSPQISVESPTVLESGTEEQC) is disordered. Phosphoserine; by host occurs at positions 92 and 99. The span at 92–112 (SGTQGVGSPQISVESPTVLES) shows a compositional bias: polar residues.

It belongs to the HIV-1 REV protein family. In terms of assembly, homomultimer; when bound to the RRE. Multimeric assembly is essential for activity and may involve XPO1. Binds to human KPNB1, XPO1, TNPO1, RANBP5 and IPO7. Interacts with the viral Integrase. Interacts with human KHDRBS1. Interacts with human NAP1; this interaction decreases Rev multimerization and stimulates its activity. Interacts with human DEAD-box helicases DDX3 and DDX24; these interactions may serve for viral RNA export to the cytoplasm and packaging, respectively. Interacts with human PSIP1; this interaction may inhibit HIV-1 DNA integration by promoting dissociation of the Integrase-LEDGF/p75 complex. Post-translationally, asymmetrically arginine dimethylated at one site by host PRMT6. Methylation impairs the RNA-binding activity and export of viral RNA from the nucleus to the cytoplasm. In terms of processing, phosphorylated by protein kinase CK2. Presence of, and maybe binding to the N-terminus of the regulatory beta subunit of CK2 is necessary for CK2-mediated Rev's phosphorylation.

Its subcellular location is the host nucleus. It is found in the host nucleolus. The protein resides in the host cytoplasm. Its function is as follows. Escorts unspliced or incompletely spliced viral pre-mRNAs (late transcripts) out of the nucleus of infected cells. These pre-mRNAs carry a recognition sequence called Rev responsive element (RRE) located in the env gene, that is not present in fully spliced viral mRNAs (early transcripts). This function is essential since most viral proteins are translated from unspliced or partially spliced pre-mRNAs which cannot exit the nucleus by the pathway used by fully processed cellular mRNAs. Rev itself is translated from a fully spliced mRNA that readily exits the nucleus. Rev's nuclear localization signal (NLS) binds directly to KPNB1/Importin beta-1 without previous binding to KPNA1/Importin alpha-1. KPNB1 binds to the GDP bound form of RAN (Ran-GDP) and targets Rev to the nucleus. In the nucleus, the conversion from Ran-GDP to Ran-GTP dissociates Rev from KPNB1 and allows Rev's binding to the RRE in viral pre-mRNAs. Rev multimerization on the RRE via cooperative assembly exposes its nuclear export signal (NES) to the surface. Rev can then form a complex with XPO1/CRM1 and Ran-GTP, leading to nuclear export of the complex. Conversion from Ran-GTP to Ran-GDP mediates dissociation of the Rev/RRE/XPO1/RAN complex, so that Rev can return to the nucleus for a subsequent round of export. Beside KPNB1, also seems to interact with TNPO1/Transportin-1, RANBP5/IPO5 and IPO7/RANBP7 for nuclear import. The nucleoporin-like HRB/RIP is an essential cofactor that probably indirectly interacts with Rev to release HIV RNAs from the perinuclear region to the cytoplasm. In Human immunodeficiency virus type 1 group M subtype D (isolate Z2/CDC-Z34) (HIV-1), this protein is Protein Rev.